Consider the following 253-residue polypeptide: Pro-opiomelanocortin A (253 aa).

An N-terminal signal peptide occupies residues 1-21 (MLCPAWLLAVAVVGVVRGVKG). Gln-22 is subject to Pyrrolidone carboxylic acid. 2 disulfides stabilise this stretch: Cys-23/Cys-45 and Cys-29/Cys-41. Ser-104 is subject to N-acetylserine; in Corticotropin. Val-116 is modified (valine amide). Residues 228–253 (QKREQWGREEGEEKRALGERKYHFQG) form a disordered region. Position 252 is a glutamine amide; partial (Gln-252).

This sequence belongs to the POMC family. In terms of processing, specific enzymatic cleavages at paired basic residues yield the different active peptides. Acetylation of beta-endorphin occurs in a tissue-specific manner. In terms of tissue distribution, C-terminal peptide 1 and C-terminal peptide 2 are detected in the anterior part of the nucleus lateralis tuberis of hypothalamus, in dorsal hypothalamus, thalamus, telencephalon, optic tectum and medulla oblongata (at protein level). Expressed in pituitary and hypothalamus of adult diploid animals, and hypothalamus of triploid and ovulated female trout.

Its subcellular location is the secreted. Its function is as follows. Stimulates the adrenal glands to release cortisol. In terms of biological role, melanocyte-stimulating hormone alpha: Anorexigenic peptide. Increases the pigmentation of skin by increasing melanin production in melanocytes. Functionally, melanocyte-stimulating hormone beta: Increases the pigmentation of skin by increasing melanin production in melanocytes. Beta-endorphin: Endogenous orexigenic opiate. Its function is as follows. Endogenous opiate. This chain is Pro-opiomelanocortin A (pomca), found in Oncorhynchus mykiss (Rainbow trout).